A 644-amino-acid chain; its full sequence is Magnetosome protein MamZ (644 aa).

The major facilitator domain stretch occupies residues 1-427 (MPRNAEAPAK…YAAWLLANGI (427 aa)). 18 helical membrane-spanning segments follow: residues 22–42 (WNII…SISI), 63–83 (ADIQ…FGLL), 92–112 (IIAL…LSLQ), 113–133 (VGLA…VLLT), 159–179 (LMGN…AIVM), 185–205 (PGGV…GFQL), 254–274 (VIIL…LVGV), 281–301 (AHAA…VPLW), 311–331 (ISAI…LGMF), 337–357 (WLVA…FVTL), 369–389 (ILGA…VMLV), 403–423 (APFI…AWLL), 440–460 (TVDW…WLVG), 478–498 (VGFV…ISLA), 518–538 (IGLF…ALEW), 553–573 (PFIL…FTSA), 588–608 (LHSA…LAAN), and 612–629 (GEPY…WYRF). The interval 488–599 (WAFTFLIISL…SATYVINALV (112 aa)) is ferric reductase-like domain.

The protein in the N-terminal section; belongs to the major facilitator superfamily.

It localises to the magnetosome membrane. In terms of biological role, required for correct biomineralization of the magnetosome; probably converts and then transports some form of iron. It is partially functionally redundant with MamH. May function with MamX, MamY amd Mms6. This Paramagnetospirillum magneticum (strain ATCC 700264 / AMB-1) (Magnetospirillum magneticum) protein is Magnetosome protein MamZ.